A 205-amino-acid chain; its full sequence is Small ribosomal subunit protein uS4 (205 aa).

The interval 18 to 45 is disordered; the sequence is NIWGRPKSPVNRREYGPGQHGQRRKGKL. Positions 94-157 constitute an S4 RNA-binding domain; sequence RRLDTVVYRA…KQLAFVLEAS (64 aa).

This sequence belongs to the universal ribosomal protein uS4 family. Part of the 30S ribosomal subunit. Contacts protein S5. The interaction surface between S4 and S5 is involved in control of translational fidelity.

Functionally, one of the primary rRNA binding proteins, it binds directly to 16S rRNA where it nucleates assembly of the body of the 30S subunit. With S5 and S12 plays an important role in translational accuracy. The polypeptide is Small ribosomal subunit protein uS4 (Rhodopseudomonas palustris (strain BisA53)).